The sequence spans 588 residues: Actin-histidine N-methyltransferase (588 aa).

The segment at 1-25 is disordered; it reads MGKKSRVKTQKSGTGATASVSPKET. Polar residues predominate over residues 10–25; the sequence is QKSGTGATASVSPKET. S-adenosyl-L-methionine-binding positions include Arg-75, 104–106, Arg-254, 275–279, and 325–327; these read EGF, DMCNH, and SGF. The region spanning 94–314 is the SET domain; it reads EGFEMVNFKE…AGEQIYIFYG (221 aa). The disordered stretch occupies residues 546–588; it reads VNGENSIPNGTRSGKENFNQEGSERATEGTKESSSDSTAGARE. The span at 548-566 shows a compositional bias: polar residues; the sequence is GENSIPNGTRSGKENFNQE. A compositionally biased stretch (basic and acidic residues) spans 567–579; sequence GSERATEGTKESS.

This sequence belongs to the class V-like SAM-binding methyltransferase superfamily. SETD3 actin-histidine methyltransferase family. Interacts with MYOD1. Phosphorylated by GSK3B, which is required for recognition by the SCF(FBXW7) complex and subsequent degradation. In terms of processing, ubiquitinated by the SCF(FBXW7) complex following phosphorylation by GSK3B, leading to its degradation by the proteasome.

It localises to the cytoplasm. The protein localises to the nucleus. It carries out the reaction L-histidyl-[protein] + S-adenosyl-L-methionine = N(tele)-methyl-L-histidyl-[protein] + S-adenosyl-L-homocysteine + H(+). Functionally, protein-histidine N-methyltransferase that specifically mediates 3-methylhistidine (tele-methylhistidine) methylation of actin at 'His-73'. Histidine methylation of actin is required for smooth muscle contraction of the laboring uterus during delivery. Does not have protein-lysine N-methyltransferase activity and probably only catalyzes histidine methylation of actin. In Canis lupus familiaris (Dog), this protein is Actin-histidine N-methyltransferase.